The chain runs to 307 residues: Coproporphyrin III ferrochelatase (307 aa).

Fe-coproporphyrin III-binding positions include Tyr-12, Arg-29, 45–46, Ser-53, and Tyr-124; that span reads RY. Fe(2+) contacts are provided by His-181 and Glu-263.

The protein belongs to the ferrochelatase family.

It is found in the cytoplasm. It catalyses the reaction Fe-coproporphyrin III + 2 H(+) = coproporphyrin III + Fe(2+). It participates in porphyrin-containing compound metabolism; protoheme biosynthesis. Its function is as follows. Involved in coproporphyrin-dependent heme b biosynthesis. Catalyzes the insertion of ferrous iron into coproporphyrin III to form Fe-coproporphyrin III. The sequence is that of Coproporphyrin III ferrochelatase from Staphylococcus saprophyticus subsp. saprophyticus (strain ATCC 15305 / DSM 20229 / NCIMB 8711 / NCTC 7292 / S-41).